The primary structure comprises 1077 residues: Response regulator SSK1 (1077 aa).

The Response regulatory domain occupies 854–1000 (NVLIVEDNII…FLERKVMEWG (147 aa)). Asp-903 is subject to 4-aspartylphosphate.

Belongs to the SSK1 family.

The protein resides in the cytoplasm. Its function is as follows. Two-domain response regulator protein in the two-component signal transduction system of the HOG1 pathway. Involved in multi-stress responses and is essential for conidiation, secondary metabolism, autophagy and endocyrosis. In addition, regulates mycelial growth, cell nucleus development, septum formation, and organelle development. Also regulates trap formation and thus plays a crucial role in pathogenicity. The chain is Response regulator SSK1 from Arthrobotrys oligospora (strain ATCC 24927 / CBS 115.81 / DSM 1491) (Nematode-trapping fungus).